Reading from the N-terminus, the 206-residue chain is Ribonuclease HII (206 aa).

In terms of domain architecture, RNase H type-2 spans Ala-19 to Glu-206. A divalent metal cation is bound by residues Asp-25, Glu-26, and Asp-117.

It belongs to the RNase HII family. It depends on Mn(2+) as a cofactor. Requires Mg(2+) as cofactor.

The protein resides in the cytoplasm. It catalyses the reaction Endonucleolytic cleavage to 5'-phosphomonoester.. In terms of biological role, endonuclease that specifically degrades the RNA of RNA-DNA hybrids. This Vibrio cholerae serotype O1 (strain M66-2) protein is Ribonuclease HII.